A 244-amino-acid polypeptide reads, in one-letter code: Small ribosomal subunit protein eS6 (244 aa).

Residues 185–244 (RLQRKRHMRAVKRRRYAKQREEEATYAKLLAKRKKEEREAHAKRRSSARESSLRESKSKA) are disordered. Residues 186-201 (LQRKRHMRAVKRRRYA) show a composition bias toward basic residues. Residues 231-244 (SARESSLRESKSKA) are compositionally biased toward basic and acidic residues.

The protein belongs to the eukaryotic ribosomal protein eS6 family. Post-translationally, ribosomal protein S6 is the major substrate of protein kinases in eukaryote ribosomes.

Its function is as follows. Component of the 40S small ribosomal subunit. Plays an important role in controlling cell growth and proliferation through the selective translation of particular classes of mRNA. The chain is Small ribosomal subunit protein eS6 (RPS6) from Branchiostoma floridae (Florida lancelet).